The chain runs to 409 residues: MTSLIRSERVAAGLLLLAAVVGLVVANTPAGPGLLAWADGHLALPAIGVDLSLRHWVSDGLLVVFFFIVAVELKHEFLAGGLNSVSRALVPAIAAVGGVVVPALVYLAITAGSGLERGWPVPTATDIAFALGVLAVFGRGLPAAVRVFLLALAVLDDLIAIGIIAVFFTTGLDLGALAIAVAGVVLFAVVGRLGVGRTGAARIAVVALLVLVALVTWWATLSSGIHATIAGVALGFALPRLSGLRAAHALEPASNGIVLPLFAFSAALVAIPAIGLAELAPAFWGIALALPLGKLVGITAGGLLGAWVARRRGSAGGLAVPDLVTVSLLGGIGFTVSLLMSELAFAGLDDVRDEGTLAVLLGSGVAIVAAAVTLSIRSRRARRAGAAADDDDATRDDFPAHADGGPARA.

Transmembrane regions (helical) follow at residues 10-30, 60-80, 89-109, 118-138, 148-168, 171-191, 203-223, 224-244, 257-277, 283-303, 328-348, and 356-376; these read VAAGLLLLAAVVGLVVANTPA, GLLVVFFFIVAVELKHEFLAG, LVPAIAAVGGVVVPALVYLAI, GWPVPTATDIAFALGVLAVFG, FLLALAVLDDLIAIGIIAVFF, GLDLGALAIAVAGVVLFAVVG, IAVVALLVLVALVTWWATLSS, GIHATIAGVALGFALPRLSGL, IVLPLFAFSAALVAIPAIGLA, FWGIALALPLGKLVGITAGGL, LLGGIGFTVSLLMSELAFAGL, and TLAVLLGSGVAIVAAAVTLSI. The segment at 384–409 is disordered; that stretch reads AGAAADDDDATRDDFPAHADGGPARA.

Belongs to the NhaA Na(+)/H(+) (TC 2.A.33) antiporter family.

Its subcellular location is the cell membrane. The catalysed reaction is Na(+)(in) + 2 H(+)(out) = Na(+)(out) + 2 H(+)(in). Functionally, na(+)/H(+) antiporter that extrudes sodium in exchange for external protons. This Clavibacter michiganensis subsp. michiganensis (strain NCPPB 382) protein is Na(+)/H(+) antiporter NhaA 2.